A 367-amino-acid chain; its full sequence is Heme A synthase (367 aa).

5 helical membrane-spanning segments follow: residues 25–45, 111–131, 139–159, 174–194, and 210–230; these read ALRF…LVGG, LIAR…WLTG, WPLV…WWMV, LATH…IMRG, and GFAA…ALVA. Heme is bound at residue H274. 3 helical membrane-spanning segments follow: residues 276-296, 305-325, and 327-347; these read IGAY…LRAA, AVVL…TLLM, and VPLH…GFAI. H335 lines the heme pocket.

This sequence belongs to the COX15/CtaA family. Type 2 subfamily. In terms of assembly, interacts with CtaB. Heme b is required as a cofactor.

It is found in the cell membrane. The enzyme catalyses Fe(II)-heme o + 2 A + H2O = Fe(II)-heme a + 2 AH2. Its pathway is porphyrin-containing compound metabolism; heme A biosynthesis; heme A from heme O: step 1/1. In terms of biological role, catalyzes the conversion of heme O to heme A by two successive hydroxylations of the methyl group at C8. The first hydroxylation forms heme I, the second hydroxylation results in an unstable dihydroxymethyl group, which spontaneously dehydrates, resulting in the formyl group of heme A. This is Heme A synthase from Rhizobium leguminosarum bv. trifolii (strain WSM2304).